A 432-amino-acid polypeptide reads, in one-letter code: Zinc finger protein 829 (432 aa).

In terms of domain architecture, KRAB spans 35–106; the sequence is VMFRDVSIDF…DRELTRGLCS (72 aa). The C2H2-type 1 zinc finger occupies 156 to 178; the sequence is WECKICGKTFNQNSQFIQHQRIH. The C2H2-type 2; degenerate zinc-finger motif lies at 184 to 206; it reads YESKEYGKSFSRGSLVTRHQRIH. 8 C2H2-type zinc fingers span residues 212–234, 240–262, 268–290, 296–318, 324–346, 352–374, 380–402, and 408–430; these read YECK…QRIH, YECK…LRIH, YECK…QRMH, YECK…HRIH, YECE…QRIH, YECN…QRIH, and YDCK…EGIH.

The protein belongs to the krueppel C2H2-type zinc-finger protein family.

It is found in the nucleus. Its function is as follows. May be involved in transcriptional regulation. The polypeptide is Zinc finger protein 829 (ZNF829) (Homo sapiens (Human)).